The sequence spans 754 residues: Glutathione biosynthesis bifunctional protein GshAB (754 aa).

The interval 1–333 (MHINQLLQHA…KAQKLNDKIA (333 aa)) is glutamate--cysteine ligase. One can recognise an ATP-grasp domain in the interval 489-752 (KKILRENGYP…LAKLFPEIST (264 aa)). 516-574 (SQIKNKPIVVKPKTTNFGLGISIFETAASHNDYEKALDIAFIEDYSVLVEEFIPGTEYR) is an ATP binding site. Mg(2+) contacts are provided by Asp-696, Glu-717, and Asn-719. Mn(2+) is bound by residues Asp-696, Glu-717, and Asn-719.

This sequence in the N-terminal section; belongs to the glutamate--cysteine ligase type 1 family. Type 2 subfamily. In terms of assembly, monomer. Mg(2+) is required as a cofactor. Mn(2+) serves as cofactor.

The enzyme catalyses L-cysteine + L-glutamate + ATP = gamma-L-glutamyl-L-cysteine + ADP + phosphate + H(+). It carries out the reaction gamma-L-glutamyl-L-cysteine + glycine + ATP = glutathione + ADP + phosphate + H(+). The protein operates within sulfur metabolism; glutathione biosynthesis; glutathione from L-cysteine and L-glutamate: step 1/2. Its pathway is sulfur metabolism; glutathione biosynthesis; glutathione from L-cysteine and L-glutamate: step 2/2. Its function is as follows. Synthesizes glutathione from L-glutamate and L-cysteine via gamma-L-glutamyl-L-cysteine. This is Glutathione biosynthesis bifunctional protein GshAB from Streptococcus mutans serotype c (strain ATCC 700610 / UA159).